Reading from the N-terminus, the 583-residue chain is MNNRQITTLWSTLLVEALIRQGVDFFCISPGSRSTPLTIAAARNPRARTKLFADERSAAFFALGYARATEMVAPLICTSGTAVANYFPAVVEASMDFQPMLIISADRPFELLECGANQTIRQEHIFGSYTRWSMQLPTPSVEVPLTSLLSTVEYAVAKALNTPAGVVHLNQPFREPFEPESVAANNHAWWQSAQQWLASKAAHTTTTVEKKHPNNASITLLRQHLTTAKQPLLIAGSMRCKDDAEAVAALANNLKIPLYADFSSGLRMKSNLPPLQLLMQSPAWRAAFHPDVVLHFGGNVVAKHLATALREWQPAHYMVVREEPMRFSPDHNVTHRLEASIAATAHALHNSRSTPLWRESEADHFFAQAAQELEGDVVADQPITEISAARLISRHIGTEQALFVSNSMAVRDMDMYAASLHEAGIPTAINRGASGIDGILSTAAGFACGHGKSTTLLIGDIAFLHDLNALSLLGSLTVPLQIVLLNNNGGGIFSFLPIAACDDLFETYFATPQHYSIPLAAETFGLHYANPTTNSEFVAAYHQAQQSPQSTIIEVKSSRTNNLQHHRLLNARLQAIAAKLFNG.

The protein belongs to the TPP enzyme family. MenD subfamily. As to quaternary structure, homodimer. Mg(2+) is required as a cofactor. It depends on Mn(2+) as a cofactor. Requires thiamine diphosphate as cofactor.

It carries out the reaction isochorismate + 2-oxoglutarate + H(+) = 5-enolpyruvoyl-6-hydroxy-2-succinyl-cyclohex-3-ene-1-carboxylate + CO2. It participates in quinol/quinone metabolism; 1,4-dihydroxy-2-naphthoate biosynthesis; 1,4-dihydroxy-2-naphthoate from chorismate: step 2/7. It functions in the pathway quinol/quinone metabolism; menaquinone biosynthesis. Catalyzes the thiamine diphosphate-dependent decarboxylation of 2-oxoglutarate and the subsequent addition of the resulting succinic semialdehyde-thiamine pyrophosphate anion to isochorismate to yield 2-succinyl-5-enolpyruvyl-6-hydroxy-3-cyclohexene-1-carboxylate (SEPHCHC). The chain is 2-succinyl-5-enolpyruvyl-6-hydroxy-3-cyclohexene-1-carboxylate synthase from Chlorobium chlorochromatii (strain CaD3).